The sequence spans 88 residues: Small ribosomal subunit protein bS20 (88 aa).

The protein belongs to the bacterial ribosomal protein bS20 family.

Functionally, binds directly to 16S ribosomal RNA. This chain is Small ribosomal subunit protein bS20, found in Bacillus licheniformis (strain ATCC 14580 / DSM 13 / JCM 2505 / CCUG 7422 / NBRC 12200 / NCIMB 9375 / NCTC 10341 / NRRL NRS-1264 / Gibson 46).